Here is a 284-residue protein sequence, read N- to C-terminus: Phosphatidylglycerol--prolipoprotein diacylglyceryl transferase (284 aa).

7 helical membrane passes run 18–38 (LGGI…VIAF), 62–82 (YFLW…VLIY), 106–126 (FVGI…IASY), 136–156 (LLIY…FGRI), 190–210 (PSQL…VLWA), 218–238 (GLLI…AEFY), and 252–272 (LSMG…ILLY). R155 is an a 1,2-diacyl-sn-glycero-3-phospho-(1'-sn-glycerol) binding site.

The protein belongs to the Lgt family.

It localises to the cell inner membrane. It catalyses the reaction L-cysteinyl-[prolipoprotein] + a 1,2-diacyl-sn-glycero-3-phospho-(1'-sn-glycerol) = an S-1,2-diacyl-sn-glyceryl-L-cysteinyl-[prolipoprotein] + sn-glycerol 1-phosphate + H(+). Its pathway is protein modification; lipoprotein biosynthesis (diacylglyceryl transfer). In terms of biological role, catalyzes the transfer of the diacylglyceryl group from phosphatidylglycerol to the sulfhydryl group of the N-terminal cysteine of a prolipoprotein, the first step in the formation of mature lipoproteins. This Helicobacter pylori (strain G27) protein is Phosphatidylglycerol--prolipoprotein diacylglyceryl transferase.